The primary structure comprises 2236 residues: uncharacterized protein (2236 aa).

Spectrin repeat units lie at residues 46-146 and 238-335; these read QVYL…RQLE and QKFV…TDIE. Coiled-coil stretches lie at residues 496 to 541 and 603 to 631; these read VVEQ…TVNS and DDQQ…VGRQ. Spectrin repeat units lie at residues 839-949, 1048-1146, 1261-1361, 1367-1459, and 1562-1667; these read YEYD…KTLK, KKLE…KRME, LGAE…VDLN, ILID…KSLA, and QKVV…NRLE. Positions 1835 to 1869 form a coiled coil; it reads QNSTDAEKKLSLVSERLNALKKQLDLLAEKIAVDD. EF-hand domains lie at 2104–2139 and 2141–2176; these read KQLH…QGYN and SAEN…HETT. The Ca(2+) site is built by D2154, S2156, T2158, H2160, and D2165.

Belongs to the spectrin family.

This is an uncharacterized protein from Caenorhabditis elegans.